Consider the following 1271-residue polypeptide: Chitin synthase 4 (1271 aa).

2 disordered regions span residues 1-45 and 58-117; these read MPPT…SFDH and PNHP…ERPS. Residues 21 to 30 show a composition bias toward polar residues; it reads APDTQESSPA. The next 2 membrane-spanning stretches (helical) occupy residues 165–185 and 201–221; these read WWIR…LVHL and LAIF…IIFF. N-linked (GlcNAc...) asparagine glycosylation occurs at N407. Residues 473 to 493 traverse the membrane as a helical segment; it reads LLLAFSIILIATIASKFLAAL. 2 N-linked (GlcNAc...) asparagine glycosylation sites follow: N713 and N836. A run of 3 helical transmembrane segments spans residues 867–887, 894–914, and 919–939; these read LLGT…VIVV, IPVI…LIFI, and FMLI…SVFL. Residues 999–1081 form a disordered region; that stretch reads HSESPAPSEK…DKSFIRGSKP (83 aa). The segment covering 1027–1037 has biased composition (polar residues); sequence RSPSFHSSASE. Residues N1055 and N1161 are each glycosylated (N-linked (GlcNAc...) asparagine). The DEK-C domain occupies 1213–1269; the sequence is EVQDEEVLDKLKTWLSKQDLMSVTKRQTREAIYTLFPNAGLQNRAGWLNEQIDKILS.

This sequence belongs to the chitin synthase family.

It is found in the cell membrane. The enzyme catalyses [(1-&gt;4)-N-acetyl-beta-D-glucosaminyl](n) + UDP-N-acetyl-alpha-D-glucosamine = [(1-&gt;4)-N-acetyl-beta-D-glucosaminyl](n+1) + UDP + H(+). Functionally, polymerizes chitin, a structural polymer of the cell wall and septum, by transferring the sugar moiety of UDP-GlcNAc to the non-reducing end of the growing chitin polymer. Produces a large proportion of the chitin that is not deacetylated to chitosan. The sequence is that of Chitin synthase 4 from Cryptococcus neoformans var. grubii serotype A (strain H99 / ATCC 208821 / CBS 10515 / FGSC 9487) (Filobasidiella neoformans var. grubii).